Reading from the N-terminus, the 378-residue chain is Rhodopsin (378 aa).

Residues 1–53 (MMSIASGPSHAAYTWASQGGGFGNQTVVDKVPPEMLHMVDAHWYQFPPMNPLW) are Extracellular-facing. N24 carries an N-linked (GlcNAc...) asparagine glycan. The helical transmembrane segment at 54-78 (HALLGFVIGVLGVISVIGNGMVIYI) threads the bilayer. Over 79–90 (FTTTKSLRTPSN) the chain is Cytoplasmic. A helical transmembrane segment spans residues 91-115 (LLVVNLAISDFLMMLCMSPAMVINC). Over 116–130 (YYETWVLGPLFCELY) the chain is Extracellular. A disulfide bridge links C127 with C204. The helical transmembrane segment at 131–150 (GLAGSLFGCASIWTMTMIAF) threads the bilayer. Residues 151–169 (DRYNVIVKGLSAKPMTING) lie on the Cytoplasmic side of the membrane. Residues 170–193 (ALIRILTIWFFTLAWTIAPMFGWN) form a helical membrane-spanning segment. Residues 194 to 217 (RYVPEGNMTACGTDYLTKDLFSRS) lie on the Extracellular side of the membrane. An N-linked (GlcNAc...) asparagine glycan is attached at N200. A helical transmembrane segment spans residues 218 to 245 (YILIYSIFVYFTPLFLIIYSYFFIIQAV). Topologically, residues 246–280 (AAHEKNMREQAKKMNVASLRSAENQSTSAECKLAK) are cytoplasmic. A helical membrane pass occupies residues 281–304 (VALMTISLWFMAWTPYLVINYSGI). The Extracellular segment spans residues 305-311 (FETTKIS). The chain crosses the membrane as a helical span at residues 312–336 (PLFTIWGSLFAKANAVYNPIVYGIS). At K323 the chain carries N6-(retinylidene)lysine. Over 337–378 (HPKYRAALFQKFPSLACTTEPTGADTMSTTTTVTEGNEKPAA) the chain is Cytoplasmic.

This sequence belongs to the G-protein coupled receptor 1 family. Opsin subfamily. Post-translationally, phosphorylated on some or all of the serine and threonine residues present in the C-terminal region.

The protein resides in the membrane. Visual pigments are the light-absorbing molecules that mediate vision. They consist of an apoprotein, opsin, covalently linked to cis-retinal. The chain is Rhodopsin from Camponotus atriceps (Florida carpenter ant).